The following is a 387-amino-acid chain: Cell surface GPI-anchored protein ARB_01627 (387 aa).

Residues 1–19 (MAITKYLVSALAVAGLAFA) form the signal peptide. N-linked (GlcNAc...) asparagine glycosylation is found at Asn-73, Asn-175, Asn-201, Asn-206, Asn-231, Asn-236, Asn-253, and Asn-270. The span at 338–361 (TCRERQEKPKTGDDHSGGDEEGHK) shows a compositional bias: basic and acidic residues. Positions 338 to 362 (TCRERQEKPKTGDDHSGGDEEGHKG) are disordered. A lipid anchor (GPI-anchor amidated alanine) is attached at Ala-364. The propeptide at 365 to 387 (AAFAKAPAAALLIAFVGALQFFL) is removed in mature form.

It belongs to the SPS2 family. Post-translationally, the GPI-anchor is attached to the protein in the endoplasmic reticulum and serves to target the protein to the cell surface. There, the glucosamine-inositol phospholipid moiety is cleaved off and the GPI-modified mannoprotein is covalently attached via its lipidless GPI glycan remnant to the 1,6-beta-glucan of the outer cell wall layer.

The protein localises to the cell membrane. It localises to the secreted. The protein resides in the cell wall. In terms of biological role, required for proper cell wall integrity and for the correct assembly of the mannoprotein outer layer of the cell wall. The polypeptide is Cell surface GPI-anchored protein ARB_01627 (Arthroderma benhamiae (strain ATCC MYA-4681 / CBS 112371) (Trichophyton mentagrophytes)).